The primary structure comprises 273 residues: Large ribosomal subunit protein uL2 (273 aa).

Positions 221–263 (RGTAMNPVDHPHGGGEGRNFGKHPVSPWGLKTKGKKTRRNKRT) are disordered. A compositionally biased stretch (basic residues) spans 252 to 263 (TKGKKTRRNKRT).

It belongs to the universal ribosomal protein uL2 family. In terms of assembly, part of the 50S ribosomal subunit. Forms a bridge to the 30S subunit in the 70S ribosome.

One of the primary rRNA binding proteins. Required for association of the 30S and 50S subunits to form the 70S ribosome, for tRNA binding and peptide bond formation. It has been suggested to have peptidyltransferase activity; this is somewhat controversial. Makes several contacts with the 16S rRNA in the 70S ribosome. The chain is Large ribosomal subunit protein uL2 from Buchnera aphidicola subsp. Cinara cedri (strain Cc).